Here is a 55-residue protein sequence, read N- to C-terminus: Small integral membrane protein 27 (55 aa).

Residues tryptophan 11–alanine 31 traverse the membrane as a helical segment.

It localises to the membrane. The chain is Small integral membrane protein 27 from Homo sapiens (Human).